A 78-amino-acid polypeptide reads, in one-letter code: Short neurotoxin OH-5 (78 aa).

Residues methionine 1 to threonine 21 form the signal peptide. Disulfide bonds link cysteine 24–cysteine 40, cysteine 33–cysteine 58, cysteine 62–cysteine 70, and cysteine 71–cysteine 76.

It belongs to the three-finger toxin family. Short-chain subfamily. In terms of tissue distribution, expressed by the venom gland.

Its subcellular location is the secreted. Its function is as follows. This three-finger toxin binds and inhibits the nicotinic acetylcholine receptor (nAChR). This chain is Short neurotoxin OH-5, found in Ophiophagus hannah (King cobra).